The primary structure comprises 621 residues: tRNA uridine 5-carboxymethylaminomethyl modification enzyme MnmG (621 aa).

Residue Gly-17–Gly-22 participates in FAD binding. Gly-276–Phe-290 is a binding site for NAD(+).

This sequence belongs to the MnmG family. As to quaternary structure, homodimer. Heterotetramer of two MnmE and two MnmG subunits. It depends on FAD as a cofactor.

It is found in the cytoplasm. Functionally, NAD-binding protein involved in the addition of a carboxymethylaminomethyl (cmnm) group at the wobble position (U34) of certain tRNAs, forming tRNA-cmnm(5)s(2)U34. This is tRNA uridine 5-carboxymethylaminomethyl modification enzyme MnmG from Zymomonas mobilis subsp. mobilis (strain ATCC 31821 / ZM4 / CP4).